The chain runs to 137 residues: Large ribosomal subunit protein uL16 (137 aa).

This sequence belongs to the universal ribosomal protein uL16 family. Part of the 50S ribosomal subunit.

Binds 23S rRNA and is also seen to make contacts with the A and possibly P site tRNAs. This chain is Large ribosomal subunit protein uL16, found in Lactococcus lactis subsp. lactis (strain IL1403) (Streptococcus lactis).